The following is a 175-amino-acid chain: Small ribosomal subunit protein uS5 (175 aa).

Positions 19–82 (WVDRLVSVNR…DDAKKNVIRV (64 aa)) constitute an S5 DRBM domain.

This sequence belongs to the universal ribosomal protein uS5 family. In terms of assembly, part of the 30S ribosomal subunit. Contacts proteins S4 and S8.

With S4 and S12 plays an important role in translational accuracy. In terms of biological role, located at the back of the 30S subunit body where it stabilizes the conformation of the head with respect to the body. The sequence is that of Small ribosomal subunit protein uS5 from Salinibacter ruber (strain DSM 13855 / M31).